Reading from the N-terminus, the 235-residue chain is 2,3-bisphosphoglycerate-dependent phosphoglycerate mutase 1 (235 aa).

Substrate is bound by residues 8–15 (RHGESVAN), 21–22 (TG), Arg-60, 87–90 (ERHY), Lys-98, and 114–115 (RR). The active-site Tele-phosphohistidine intermediate is His-9. Glu-87 (proton donor/acceptor) is an active-site residue.

Belongs to the phosphoglycerate mutase family. BPG-dependent PGAM subfamily.

The enzyme catalyses (2R)-2-phosphoglycerate = (2R)-3-phosphoglycerate. It participates in carbohydrate degradation; glycolysis; pyruvate from D-glyceraldehyde 3-phosphate: step 3/5. In terms of biological role, catalyzes the interconversion of 2-phosphoglycerate and 3-phosphoglycerate. The sequence is that of 2,3-bisphosphoglycerate-dependent phosphoglycerate mutase 1 from Latilactobacillus sakei subsp. sakei (strain 23K) (Lactobacillus sakei subsp. sakei).